A 62-amino-acid chain; its full sequence is Metallothionein-4 (62 aa).

Positions 6, 8, 14, 16, 20, 22, 25, 27, 30, 34, 35, 37, 38, 42, 45, 49, 51, 58, 60, and 61 each coordinate a divalent metal cation.

Belongs to the metallothionein superfamily. Type 1 family. Expressed exclusively in stratified squamous epithelia associated with oral epithelia, esophagus, upper stomach, tail, footpads and neonatal skin.

Functionally, seems to bind zinc and copper. Could play a special role in regulating zinc metabolism during the differentiation of stratified epithelia. This is Metallothionein-4 (Mt4) from Mus musculus (Mouse).